The primary structure comprises 102 residues: MAVICNTCGLPEDLCACGELAKDSTKIIIRLETRRFKKKGTMIEGLDPKLNNLETVAKELKSKYACGGTAKEGYIFLQGDHRDTIKDTLTDLGFAEESIELH.

This sequence belongs to the SUI1 family.

This Nitrosopumilus maritimus (strain SCM1) protein is Protein translation factor SUI1 homolog.